Reading from the N-terminus, the 454-residue chain is Toxin CfTX-A (454 aa).

Positions 1–18 (MDYAFIVFLVCFVSGTLG) are cleaved as a signal peptide. Positions 19–25 (NRRRAKR) are excised as a propeptide. The stretch at 27–61 (VDEVTSGINQLVNQLNNVQQDTAAIKSALEELKTE) forms a coiled coil.

The protein belongs to the jellyfish toxin family. Type II subfamily. In terms of assembly, oligomer. In terms of processing, contains 2 disulfide bonds. In terms of tissue distribution, nematocytes.

It localises to the secreted. The protein resides in the nematocyst. The protein localises to the target cell membrane. Its function is as follows. The fraction containing this toxin and CfTX-A shows potent hemolytic activity. This fraction causes minor effects on the cardiovascular system of anesthetized rats (at 25 ug/kg), since it has no significant effects on heart rate but produces relatively small increases in mean arterial pressure. The polypeptide is Toxin CfTX-A (Chironex fleckeri (Australian box jellyfish)).